The following is a 527-amino-acid chain: EGF domain-specific O-linked N-acetylglucosamine transferase (527 aa).

The N-terminal stretch at 1-17 (MLMLFVFGVLLHEVSLS) is a signal peptide. The Required for optimal activity motif lies at 295 to 297 (DYD). N-linked (GlcNAc...) asparagine glycosylation occurs at Asn-354. The Prevents secretion from ER signature appears at 524–527 (HDEL).

The protein belongs to the glycosyltransferase 61 family.

The protein resides in the endoplasmic reticulum lumen. It carries out the reaction L-seryl-[protein] + UDP-N-acetyl-alpha-D-glucosamine = 3-O-(N-acetyl-beta-D-glucosaminyl)-L-seryl-[protein] + UDP + H(+). The enzyme catalyses L-threonyl-[protein] + UDP-N-acetyl-alpha-D-glucosamine = 3-O-(N-acetyl-beta-D-glucosaminyl)-L-threonyl-[protein] + UDP + H(+). Catalyzes the transfer of a single N-acetylglucosamine from UDP-GlcNAc to a serine or threonine residue in extracellular proteins resulting in their modification with a beta-linked N-acetylglucosamine (O-GlcNAc). Specifically glycosylates the Thr residue located between the fifth and sixth conserved cysteines of folded EGF-like domains. This chain is EGF domain-specific O-linked N-acetylglucosamine transferase (EOGT), found in Pan troglodytes (Chimpanzee).